Reading from the N-terminus, the 432-residue chain is Bifunctional IPC transferase and DIPP synthase (432 aa).

A mobA-like NTP transferase region spans residues 3–225 (PERAVILAAG…RARRMLVRTA (223 aa)). Residues 9–11 (LAA), Lys-22, and Glu-113 each bind CTP. Glu-113 contributes to the Mg(2+) binding site. The tract at residues 226–426 (VKGTGDGFVS…LTLYFVVKKV (201 aa)) is CDP-alcohol phosphatidyltransferases. 3 helical membrane passes run 264–284 (FLLGIISALTTLVSLPLAGIL), 337–356 (IWYFVALLALLGSVMVSYST), and 385–405 (VFLTMLFLLYQIAASIKALFL).

The protein in the N-terminal section; belongs to the MobA family. It in the C-terminal section; belongs to the CDP-alcohol phosphatidyltransferase class-I family. It depends on Mg(2+) as a cofactor.

The protein resides in the membrane. The enzyme catalyses 1D-myo-inositol 3-phosphate + CTP + H(+) = CDP-1L-myo-inositol + diphosphate. It carries out the reaction CDP-1L-myo-inositol + 1D-myo-inositol 3-phosphate = bis(1L-myo-inositol) 3,1'-phosphate 1-phosphate + CMP + H(+). Involved in biosynthesis of di-myo-inositol phosphate (DIP), a widespread organic solute in microorganisms adapted to hot environments. Catalyzes the condensation of CTP and L-myo-inositol-1-phosphate into CDP-L-myo-inositol, as well as the biosynthesis of di-myo-inositol-1,3'-phosphate-1'-phosphate (DIPP) from CDP-L-myo-inositol and L-myo-inositol-1-phosphate. This chain is Bifunctional IPC transferase and DIPP synthase, found in Thermococcus kodakarensis (strain ATCC BAA-918 / JCM 12380 / KOD1) (Pyrococcus kodakaraensis (strain KOD1)).